Consider the following 210-residue polypeptide: Mating-type-like protein A1 (210 aa).

A DNA-binding region (homeobox) is located at residues 141–200; it reads SKKKRQRLDNSTKEFLEKVFEKNKQPNRRERELIAEKHGVSLSQIRVWFTNKRMRKKEPK.

This sequence belongs to the MATA1 family. Forms a heterodimer with ALPHA2.

The protein localises to the nucleus. In terms of biological role, mating type proteins are sequence specific DNA-binding proteins that act as master switches in yeast differentiation by controlling gene expression in a cell type-specific fashion. Transcriptional corepressor that acts in conjunction with ALPHA2 to repress transcription both of homozygote-specific genes and of genes necessary for the white-opaque switch, a prerequisite for mating. This chain is Mating-type-like protein A1 (MTLA1), found in Candida albicans (strain SC5314 / ATCC MYA-2876) (Yeast).